A 117-amino-acid chain; its full sequence is Galanin peptides (117 aa).

The N-terminal stretch at 1-19 (MQRCAGFLFLSLILCAALS) is a signal peptide. A propeptide spanning residues 20–30 (ETFGLVLSAKE) is cleaved from the precursor. At threonine 61 the chain carries Threonine amide.

It belongs to the galanin family.

The protein localises to the secreted. Endocrine hormone of the central and peripheral nervous systems that binds and activates the G protein-coupled receptors GALR1, GALR2, and GALR3. This small neuropeptide may regulate diverse physiologic functions including contraction of smooth muscle of the gastrointestinal and genitourinary tract, growth hormone and insulin release and adrenal secretion. This is Galanin peptides (GAL) from Coturnix japonica (Japanese quail).